The chain runs to 365 residues: uncharacterized protein (365 aa).

3 disordered regions span residues 119 to 157, 216 to 298, and 313 to 365; these read ERSR…QQES, RPPG…DISH, and SHHH…LSVG. Over residues 326 to 340 the composition is skewed to basic and acidic residues; it reads SDPRIESRDLPERPQ.

This is an uncharacterized protein from Homo sapiens (Human).